Here is a 125-residue protein sequence, read N- to C-terminus: MRLFKQLERWKIRRQINQSIIDVIFRLRDRLAHYWQADVNTPQVDFMLLHIACSLGRIERGGCVSSLYSEMLEEMQSAVIFPQVLAIHQDLLKLMPFSIPEAEQTYFLANIHSLVLEQKQLKPLK.

A PRD domain is found at 15 to 121 (QINQSIIDVI…HSLVLEQKQL (107 aa)).

This is an uncharacterized protein from Haemophilus influenzae (strain ATCC 51907 / DSM 11121 / KW20 / Rd).